The chain runs to 145 residues: Transcription antitermination protein NusB (145 aa).

Belongs to the NusB family.

Involved in transcription antitermination. Required for transcription of ribosomal RNA (rRNA) genes. Binds specifically to the boxA antiterminator sequence of the ribosomal RNA (rrn) operons. The protein is Transcription antitermination protein NusB of Geotalea uraniireducens (strain Rf4) (Geobacter uraniireducens).